The chain runs to 455 residues: Pre-mRNA-processing factor 17 (455 aa).

Residues 1–89 (MGLVDGYDTS…SQASETQKED (89 aa)) are disordered. Over residues 18 to 35 (DEGKSVHEKKNGNLHEDT) the composition is skewed to basic and acidic residues. The segment covering 44–63 (IHKRKSHFTKSELKRRRKTR) has biased composition (basic residues). WD repeat units follow at residues 160–200 (GHPE…ECLR), 204–243 (GHNK…VKTR), 291–330 (HHLS…PIKQ), 334–373 (TAQH…KRHP), 379–422 (GHSS…NNIK), and 424–454 (PGNK…IYVC).

In terms of assembly, belongs to the CWC complex (or CEF1-associated complex), a spliceosome sub-complex reminiscent of a late-stage spliceosome composed of the U2, U5 and U6 snRNAs and at least BUD13, BUD31, BRR2, CDC40, CEF1, CLF1, CUS1, CWC2, CWC15, CWC21, CWC22, CWC23, CWC24, CWC25, CWC27, ECM2, HSH155, IST3, ISY1, LEA1, MSL1, NTC20, PRP8, PRP9, PRP11, PRP19, PRP21, PRP22, PRP45, PRP46, SLU7, SMB1, SMD1, SMD2, SMD3, SMX2, SMX3, SNT309, SNU114, SPP2, SYF1, SYF2, RSE1 and YJU2.

It localises to the nucleus. In terms of biological role, may function in the second step of pre-mRNA splicing. Regulatory protein involved in replication and mitotic spindle formation and/or maintenance. Required for initiation and completion of S-phase and for initiation and completion of DNA replication. Might be required for the maintenance of microtubules. Essential only at elevated temperatures. This Saccharomyces cerevisiae (strain ATCC 204508 / S288c) (Baker's yeast) protein is Pre-mRNA-processing factor 17 (CDC40).